The primary structure comprises 455 residues: MKVIEKVEAIKQQEITATENLEQMYSTIEEKNDDINAFVQLDIEKARKTAEDIDKRIKNNEETGKLAGLVIGIKSNINVEDFIISAASPTLKNYYGSYNATVINRILDEDGVIIGLTNMDEFAAGSSTETSMYGPTNNPKAPGHIPGGSSGGSAAAIAANMCDITLGSDTGGSIRNPASHCGVMGFKPTYGMVSRQGLLDLAMSLDQIGPFANDTTGIGLMLNVICGYDPYDTTTINKQPEDFLKDTTNSTLEGQTIGVVKEFMDITDDKITSQINKSIDDMTSLGAEIKELSFEDINLGLPTYYLINYVEFFSATRKYDGRKYGERIEEVCGAEVARRIEIGSYISQKEFSGKYYNKALQARSLIRNEFNELLNDVDVIAGPTVPKLPHKIGEEIETMDMYAYDVLTVLANITGIPASSMNSGLVDNIPVGLQLQAKPEDDHKILSTMSALENN.

Residues K74 and S149 each act as charge relay system in the active site. The active-site Acyl-ester intermediate is the S173.

Belongs to the amidase family. GatA subfamily. In terms of assembly, heterotrimer of A, B and C subunits.

The enzyme catalyses L-glutamyl-tRNA(Gln) + L-glutamine + ATP + H2O = L-glutaminyl-tRNA(Gln) + L-glutamate + ADP + phosphate + H(+). Its function is as follows. Allows the formation of correctly charged Gln-tRNA(Gln) through the transamidation of misacylated Glu-tRNA(Gln) in organisms which lack glutaminyl-tRNA synthetase. The reaction takes place in the presence of glutamine and ATP through an activated gamma-phospho-Glu-tRNA(Gln). The polypeptide is Glutamyl-tRNA(Gln) amidotransferase subunit A (Methanosphaera stadtmanae (strain ATCC 43021 / DSM 3091 / JCM 11832 / MCB-3)).